A 216-amino-acid polypeptide reads, in one-letter code: Thymidylate kinase (216 aa).

An ATP-binding site is contributed by 10-17; it reads GIDGCGKT.

Belongs to the thymidylate kinase family.

It carries out the reaction dTMP + ATP = dTDP + ADP. Phosphorylation of dTMP to form dTDP in both de novo and salvage pathways of dTTP synthesis. This chain is Thymidylate kinase, found in Prochlorococcus marinus (strain MIT 9313).